The chain runs to 117 residues: Large ribosomal subunit protein bL20 (117 aa).

It belongs to the bacterial ribosomal protein bL20 family.

Its function is as follows. Binds directly to 23S ribosomal RNA and is necessary for the in vitro assembly process of the 50S ribosomal subunit. It is not involved in the protein synthesizing functions of that subunit. This chain is Large ribosomal subunit protein bL20, found in Leptospira biflexa serovar Patoc (strain Patoc 1 / Ames).